Consider the following 478-residue polypeptide: ATP-dependent RNA helicase DDX19A (478 aa).

Ala-2 bears the N-acetylalanine mark. The interval 2 to 299 (ATDSWALAVD…DPNIIKLKRE (298 aa)) is N-terminal lobe. Lys-26 is covalently cross-linked (Glycyl lysine isopeptide (Lys-Gly) (interchain with G-Cter in SUMO1); alternate). Residue Lys-26 forms a Glycyl lysine isopeptide (Lys-Gly) (interchain with G-Cter in SUMO2); alternate linkage. The tract at residues 34-53 (TNGVIKTSTTAEKTEEEEKE) is disordered. The residue at position 42 (Thr-42) is a Phosphothreonine. Positions 54–67 (DRAAQSLLNKLIRS) are N-terminal helix. The Q motif signature appears at 91–119 (KSFEELRLKPQLLQGVYAMGFNRPSKIQE). Residues Gln-118 and 137–144 (SQSGTGKT) contribute to the ATP site. One can recognise a Helicase ATP-binding domain in the interval 124–294 (MMLAEPPQNL…QKVVPDPNII (171 aa)). The short motif at 241-244 (DEAD) is the DEAD box element. Residues 300–478 (EETLDTIKQY…DLDEIEKIAN (179 aa)) are C-terminal lobe. One can recognise a Helicase C-terminal domain in the interval 305-473 (TIKQYYVLCN…RLDTDDLDEI (169 aa)). 2 residues coordinate ATP: Arg-428 and Arg-431.

The protein belongs to the DEAD box helicase family. DDX19/DBP5 subfamily. As to expression, found in testis, heart, brain, liver, skeletal muscle, and kidney.

Its subcellular location is the cytoplasm. It is found in the nucleus. The protein localises to the nucleoplasm. It carries out the reaction ATP + H2O = ADP + phosphate + H(+). Functionally, ATP-dependent RNA helicase involved in mRNA export from the nucleus. Rather than unwinding RNA duplexes, DDX19 functions as a remodeler of ribonucleoprotein particles, whereby proteins bound to nuclear mRNA are dissociated and replaced by cytoplasmic mRNA binding proteins. The sequence is that of ATP-dependent RNA helicase DDX19A (Ddx19a) from Mus musculus (Mouse).